The primary structure comprises 432 residues: Glutamyl-tRNA reductase (432 aa).

Residues 49–52 (TCNR), S101, 106–108 (ESQ), and Q112 each bind substrate. Catalysis depends on C50, which acts as the Nucleophile. Residue 181 to 186 (GTGETI) coordinates NADP(+). The tract at residues 410–432 (KPGYHHPTLQTTIVKTDETDPAS) is disordered.

It belongs to the glutamyl-tRNA reductase family. In terms of assembly, homodimer.

The catalysed reaction is (S)-4-amino-5-oxopentanoate + tRNA(Glu) + NADP(+) = L-glutamyl-tRNA(Glu) + NADPH + H(+). The protein operates within porphyrin-containing compound metabolism; protoporphyrin-IX biosynthesis; 5-aminolevulinate from L-glutamyl-tRNA(Glu): step 1/2. Catalyzes the NADPH-dependent reduction of glutamyl-tRNA(Glu) to glutamate 1-semialdehyde (GSA). This Xylella fastidiosa (strain 9a5c) protein is Glutamyl-tRNA reductase.